The chain runs to 652 residues: Capsid protein (652 aa).

The segment covering 1–11 (MSSNDSAQTRN) has biased composition (polar residues). Residues 1–70 (MSSNDSAQTR…SSSDPPSASG (70 aa)) are disordered. A compositionally biased stretch (low complexity) spans 34-47 (TNGPTTNSTSGSVG).

Its subcellular location is the virion. Functionally, the capsid protein self-assembles to form an icosahedral capsid with a T=2 symmetry made of 120 subunits. This is Capsid protein from Atkinsonella hypoxylon virus (isolate 2H) (AhV).